Reading from the N-terminus, the 457-residue chain is Multidrug resistance protein MdtK (457 aa).

A run of 12 helical transmembrane segments spans residues 11-31 (LLAL…MGFV), 53-73 (IWLP…PVVA), 93-113 (WLAG…GYII), 127-147 (AVGY…FQVA), 160-180 (GMVM…IFIY), 191-211 (VGCG…MLWW), 243-263 (LPIA…ALLV), 276-296 (IALN…AAVT), 316-336 (RTGV…TVLM), 357-377 (LMLL…GSGI), 387-407 (IFFI…YLLA), and 418-438 (PAGF…MMML).

This sequence belongs to the multi antimicrobial extrusion (MATE) (TC 2.A.66.1) family. MdtK subfamily.

The protein resides in the cell inner membrane. In terms of biological role, multidrug efflux pump that functions probably as a Na(+)/drug antiporter. The polypeptide is Multidrug resistance protein MdtK (Klebsiella pneumoniae subsp. pneumoniae (strain ATCC 700721 / MGH 78578)).